The chain runs to 172 residues: Adenine phosphoribosyltransferase (172 aa).

This sequence belongs to the purine/pyrimidine phosphoribosyltransferase family. In terms of assembly, homodimer.

The protein resides in the cytoplasm. The enzyme catalyses AMP + diphosphate = 5-phospho-alpha-D-ribose 1-diphosphate + adenine. It functions in the pathway purine metabolism; AMP biosynthesis via salvage pathway; AMP from adenine: step 1/1. In terms of biological role, catalyzes a salvage reaction resulting in the formation of AMP, that is energically less costly than de novo synthesis. The protein is Adenine phosphoribosyltransferase of Prochlorococcus marinus (strain MIT 9313).